The sequence spans 979 residues: Pro-apoptotic serine protease NMA111 (979 aa).

The span at M1–Q20 shows a compositional bias: basic and acidic residues. Residues M1–S43 form a disordered region. Residues N21 to S34 show a composition bias toward low complexity. A serine protease region spans residues K65–L260. Active-site charge relay system residues include H108, D139, and S222. PDZ domains lie at E277–Q362 and P871–D943.

The protein belongs to the peptidase S1C family.

The protein localises to the nucleus. Its function is as follows. Nuclear serine protease which mediates apoptosis. The sequence is that of Pro-apoptotic serine protease NMA111 (NMA111) from Lodderomyces elongisporus (strain ATCC 11503 / CBS 2605 / JCM 1781 / NBRC 1676 / NRRL YB-4239) (Yeast).